We begin with the raw amino-acid sequence, 562 residues long: Arf-GAP domain and FG repeat-containing protein 1 (562 aa).

The region spanning 11–135 (EKHLKMLRDM…WYVPPEQAKV (125 aa)) is the Arf-GAP domain. A C4-type zinc finger spans residues 29-52 (CFDCDQRGPTYVNMTVGSFVCTSC). Residues 145 to 193 (GSSASSTSSTPEVKPLKSLLGDSAPTLHLNKGTPSQSPVVGRSQGQQQE) form a disordered region. Position 167 is a phosphoserine (S167). Polar residues predominate over residues 176 to 191 (GTPSQSPVVGRSQGQQ). Phosphothreonine is present on T177. Residues S181 and S362 each carry the phosphoserine modification. The O-linked (GlcNAc) serine glycan is linked to S367.

As to quaternary structure, interacts with EPS15R and EPS15. Interacts with FCHO1. O-glycosylated. Ubiquitously expressed.

It localises to the nucleus. It is found in the cytoplasmic vesicle. Functionally, required for vesicle docking or fusion during acrosome biogenesis. May play a role in RNA trafficking or localization. In case of infection by HIV-1, acts as a cofactor for viral Rev and promotes movement of Rev-responsive element-containing RNAs from the nuclear periphery to the cytoplasm. This step is essential for HIV-1 replication. The protein is Arf-GAP domain and FG repeat-containing protein 1 (AGFG1) of Homo sapiens (Human).